We begin with the raw amino-acid sequence, 164 residues long: MNPRRKKRLTLAVALIGGVAAIASLLLYALNSNLNLFFTPTEIVQGKKDTGVMPEIGQRIRVGGMVTIGSMVRDPDSLHVEFAVHDAAGGEIIVTYDDLLPDLFREGQGIVAQGVLSAPGKLEATEVLAKHDENYMPPEVAEAMGQSHEKLDYSEDQSKAGGYK.

At 1-8 the chain is on the cytoplasmic side; sequence MNPRRKKR. The chain crosses the membrane as a helical; Signal-anchor for type II membrane protein span at residues 9-29; that stretch reads LTLAVALIGGVAAIASLLLYA. Topologically, residues 30–164 are periplasmic; the sequence is LNSNLNLFFT…EDQSKAGGYK (135 aa). His131 and Tyr135 together coordinate heme. The interval 140–164 is disordered; the sequence is VAEAMGQSHEKLDYSEDQSKAGGYK. The span at 147–158 shows a compositional bias: basic and acidic residues; sequence SHEKLDYSEDQS.

The protein belongs to the CcmE/CycJ family.

It localises to the cell inner membrane. Heme chaperone required for the biogenesis of c-type cytochromes. Transiently binds heme delivered by CcmC and transfers the heme to apo-cytochromes in a process facilitated by CcmF and CcmH. In Shewanella piezotolerans (strain WP3 / JCM 13877), this protein is Cytochrome c-type biogenesis protein CcmE.